A 535-amino-acid chain; its full sequence is Transmembrane protein 151 homolog (535 aa).

A run of 3 helical transmembrane segments spans residues 27-47 (GYGK…YATY), 73-93 (YNFV…MECW), and 254-274 (PWFL…SWPL). A disordered region spans residues 498-535 (ASISHSSSKDLKSLTLKNNNGAANNNNNNNNENPEEQP). The span at 510–529 (SLTLKNNNGAANNNNNNNNE) shows a compositional bias: low complexity.

Belongs to the TMEM151 family.

It is found in the membrane. The protein is Transmembrane protein 151 homolog of Caenorhabditis briggsae.